A 185-amino-acid polypeptide reads, in one-letter code: MILMKDIIREGNPTLREIAQPVSFPLSDEDRQLAADMMTFLENSQDPEIAAKYQLRAGVGLAAPQVDVSKQMSAVLVPGPEGEAPILKDVIINPKIISHSVQDAALAEGEGCLSVDREVPGYVPRHDRITLRYQDVEGVSHKIRLKNYPAIVCQHEIDHLNGILFFDHINKENPFAAPDDMIILE.

Positions 112 and 155 each coordinate Fe cation. Glutamate 156 is an active-site residue. Residue histidine 159 coordinates Fe cation.

Belongs to the polypeptide deformylase family. The cofactor is Fe(2+).

It carries out the reaction N-terminal N-formyl-L-methionyl-[peptide] + H2O = N-terminal L-methionyl-[peptide] + formate. In terms of biological role, removes the formyl group from the N-terminal Met of newly synthesized proteins. Requires at least a dipeptide for an efficient rate of reaction. N-terminal L-methionine is a prerequisite for activity but the enzyme has broad specificity at other positions. This chain is Peptide deformylase, found in Latilactobacillus sakei subsp. sakei (strain 23K) (Lactobacillus sakei subsp. sakei).